A 147-amino-acid polypeptide reads, in one-letter code: Hemoglobin subunit delta (147 aa).

Position 2 is an N-acetylalanine; in variant Niigata (Val2). The Globin domain occupies His3–His147. Residue Ser51 is modified to Phosphoserine. The heme b site is built by His64 and His93.

Belongs to the globin family. In terms of assembly, heterotetramer of two alpha chains and two delta chains in adult hemoglobin A2 (HbA2). HbA2 represents less than 3.5% of adult hemoglobin. As to expression, red blood cells.

In terms of biological role, involved in oxygen transport from the lung to the various peripheral tissues. This Homo sapiens (Human) protein is Hemoglobin subunit delta (HBD).